A 291-amino-acid chain; its full sequence is E3 ubiquitin-protein ligase MARCHF8 (291 aa).

Positions 22 to 72 (YRSKTKEKEREEQNEKTLGHFMSHSSNISKAGSPPSASAPAPVSSFSRTSI) are disordered. Residues 25 to 39 (KTKEKEREEQNEKTL) show a composition bias toward basic and acidic residues. Low complexity predominate over residues 50 to 72 (SKAGSPPSASAPAPVSSFSRTSI). The segment at 72–133 (ITPSSQDICR…ELCKYEFIME (62 aa)) adopts an RING-CH-type zinc-finger fold. Positions 80, 83, 97, 99, 107, 110, 123, and 126 each coordinate Zn(2+). 2 helical membrane passes run 157 to 177 (CSVT…YVLI) and 197 to 217 (FWTK…FMYV). Serine 253 carries the post-translational modification Phosphoserine.

Interacts with CD86. In terms of tissue distribution, broadly expressed. Present in immature dendritic cells (at protein level).

The protein resides in the golgi apparatus membrane. It is found in the endoplasmic reticulum membrane. Its subcellular location is the cytoplasmic vesicle membrane. The protein localises to the lysosome membrane. It localises to the early endosome membrane. The enzyme catalyses S-ubiquitinyl-[E2 ubiquitin-conjugating enzyme]-L-cysteine + [acceptor protein]-L-lysine = [E2 ubiquitin-conjugating enzyme]-L-cysteine + N(6)-ubiquitinyl-[acceptor protein]-L-lysine.. It participates in protein modification; protein ubiquitination. Functionally, E3 ubiquitin-protein ligase that plays several important roles in innate immunity and adaptive immunity. Mediates ubiquitination of CD86 and MHC class II proteins, such as HLA-DR alpha and beta, and promotes their subsequent endocytosis and sorting to lysosomes via multivesicular bodies. Possesses a very broad antiviral activity by specifically inactivating different viral fusion proteins. Targets and ubiquitinates cytoplasmic lysine residues of viral envelope glycoproteins with single transmembrane domains leading to their lysosomal degradation. Therefore, shows broad-spectrum inhibition against many viruses including retroviruses, rhabdoviruses, arenaviruses, sarbecoviruses or influenzaviruses. Strongly blocks human immunodeficiency virus type 1 envelope glycoprotein incorporation into virions by down-regulating its cell surface expression. Also blocks ebola virus glycoprotein/GP incorporation via surface down-regulation. Mediates 'Lys-63'-linked polyubiquitination of influenza M2 to target it to lysosome for degradation. Mediates the regulation of constitutive ubiquitination and trafficking of the viral restriction factor BST2 within the endocytic pathway. Plays a role in maintenance of immune tolerance to self by promoting the turnover and proteasomal degradation of PD-L1/CD274 via ubiquitination. Catalyzes the 'Lys-63'-linked polyubiquitylation of cGAS thereby inhibiting its DNA binding ability and impairing its antiviral innate immunity. Negatively regulates IL7-mediated T-cell homeostasis by mediating 'Lys-27'-linked polyubiquitination of IL7R, leading to its lysosomal degradation. In terms of biological role, (Microbial infection) Mediates 'Lys-63'-linked polyubiquitination of hepatitis C virus/HCV protein NS2 which allows its binding to HGS, an ESCRT-0 complex component, and this interaction is essential for HCV envelopment. The protein is E3 ubiquitin-protein ligase MARCHF8 of Homo sapiens (Human).